The primary structure comprises 203 residues: V-type ATP synthase subunit D (203 aa).

This sequence belongs to the V-ATPase D subunit family.

Functionally, produces ATP from ADP in the presence of a proton gradient across the membrane. The chain is V-type ATP synthase subunit D from Streptococcus pneumoniae (strain CGSP14).